The primary structure comprises 89 residues: Small ribosomal subunit protein uS14A (89 aa).

Residues 34–54 (ESLRKLPRDSNPNRLKNRDKI) form a disordered region.

The protein belongs to the universal ribosomal protein uS14 family. Part of the 30S ribosomal subunit. Contacts proteins S3 and S10.

Its function is as follows. Binds 16S rRNA, required for the assembly of 30S particles and may also be responsible for determining the conformation of the 16S rRNA at the A site. This Streptococcus pyogenes serotype M1 protein is Small ribosomal subunit protein uS14A.